A 213-amino-acid chain; its full sequence is Orotate phosphoribosyltransferase (213 aa).

Position 26 (Lys26) interacts with 5-phospho-alpha-D-ribose 1-diphosphate. Residue 34–35 (FF) coordinates orotate. Residues 72-73 (YK), Arg99, Lys100, Lys103, His105, and 124-132 (DDVITAGTA) contribute to the 5-phospho-alpha-D-ribose 1-diphosphate site. The orotate site is built by Thr128 and Arg156.

The protein belongs to the purine/pyrimidine phosphoribosyltransferase family. PyrE subfamily. Homodimer. The cofactor is Mg(2+).

It carries out the reaction orotidine 5'-phosphate + diphosphate = orotate + 5-phospho-alpha-D-ribose 1-diphosphate. It functions in the pathway pyrimidine metabolism; UMP biosynthesis via de novo pathway; UMP from orotate: step 1/2. In terms of biological role, catalyzes the transfer of a ribosyl phosphate group from 5-phosphoribose 1-diphosphate to orotate, leading to the formation of orotidine monophosphate (OMP). The sequence is that of Orotate phosphoribosyltransferase from Salmonella choleraesuis (strain SC-B67).